We begin with the raw amino-acid sequence, 123 residues long: Small ribosomal subunit protein uS12 (123 aa).

At D89 the chain carries 3-methylthioaspartic acid. Positions 102-123 are disordered; that stretch reads LDTSGVQDRRQRRSKYGAKRPK. The span at 111–123 shows a compositional bias: basic residues; that stretch reads RQRRSKYGAKRPK.

This sequence belongs to the universal ribosomal protein uS12 family. In terms of assembly, part of the 30S ribosomal subunit. Contacts proteins S8 and S17. May interact with IF1 in the 30S initiation complex.

Functionally, with S4 and S5 plays an important role in translational accuracy. Its function is as follows. Interacts with and stabilizes bases of the 16S rRNA that are involved in tRNA selection in the A site and with the mRNA backbone. Located at the interface of the 30S and 50S subunits, it traverses the body of the 30S subunit contacting proteins on the other side and probably holding the rRNA structure together. The combined cluster of proteins S8, S12 and S17 appears to hold together the shoulder and platform of the 30S subunit. This Lawsonia intracellularis (strain PHE/MN1-00) protein is Small ribosomal subunit protein uS12.